The following is a 354-amino-acid chain: Anthranilate phosphoribosyltransferase (354 aa).

5-phospho-alpha-D-ribose 1-diphosphate is bound by residues glycine 94, 97 to 98 (GD), threonine 102, 104 to 107 (NIST), 122 to 130 (KHGNRAASS), and serine 134. Glycine 94 is an anthranilate binding site. A Mg(2+)-binding site is contributed by serine 106. Asparagine 125 contributes to the anthranilate binding site. Arginine 180 serves as a coordination point for anthranilate. Residues aspartate 238 and glutamate 239 each coordinate Mg(2+).

The protein belongs to the anthranilate phosphoribosyltransferase family. Homodimer. Requires Mg(2+) as cofactor.

It catalyses the reaction N-(5-phospho-beta-D-ribosyl)anthranilate + diphosphate = 5-phospho-alpha-D-ribose 1-diphosphate + anthranilate. Its pathway is amino-acid biosynthesis; L-tryptophan biosynthesis; L-tryptophan from chorismate: step 2/5. In terms of biological role, catalyzes the transfer of the phosphoribosyl group of 5-phosphorylribose-1-pyrophosphate (PRPP) to anthranilate to yield N-(5'-phosphoribosyl)-anthranilate (PRA). This Streptomyces griseus subsp. griseus (strain JCM 4626 / CBS 651.72 / NBRC 13350 / KCC S-0626 / ISP 5235) protein is Anthranilate phosphoribosyltransferase.